A 227-amino-acid polypeptide reads, in one-letter code: Cytidylate kinase (227 aa).

12-20 provides a ligand contact to ATP; that stretch reads GPSGAGKGT.

Belongs to the cytidylate kinase family. Type 1 subfamily.

Its subcellular location is the cytoplasm. The enzyme catalyses CMP + ATP = CDP + ADP. It carries out the reaction dCMP + ATP = dCDP + ADP. The sequence is that of Cytidylate kinase from Salmonella paratyphi A (strain ATCC 9150 / SARB42).